We begin with the raw amino-acid sequence, 104 residues long: Large ribosomal subunit protein uL24 (104 aa).

Belongs to the universal ribosomal protein uL24 family. In terms of assembly, part of the 50S ribosomal subunit.

One of two assembly initiator proteins, it binds directly to the 5'-end of the 23S rRNA, where it nucleates assembly of the 50S subunit. In terms of biological role, one of the proteins that surrounds the polypeptide exit tunnel on the outside of the subunit. This is Large ribosomal subunit protein uL24 from Pseudomonas aeruginosa (strain LESB58).